A 439-amino-acid chain; its full sequence is Ribosomal protein uS12 methylthiotransferase RimO (439 aa).

An MTTase N-terminal domain is found at 3-118 (KKFYITTLGC…AGKILREKFP (116 aa)). Positions 12, 48, 81, 157, 161, and 164 each coordinate [4Fe-4S] cluster. Positions 143 to 370 (NYSKPYAYVK…RDVHLAILEE (228 aa)) constitute a Radical SAM core domain. One can recognise a TRAM domain in the interval 373-438 (ESRIGQTYDA…EYDMNGTWIS (66 aa)).

The protein belongs to the methylthiotransferase family. RimO subfamily. [4Fe-4S] cluster is required as a cofactor.

It localises to the cytoplasm. The enzyme catalyses L-aspartate(89)-[ribosomal protein uS12]-hydrogen + (sulfur carrier)-SH + AH2 + 2 S-adenosyl-L-methionine = 3-methylsulfanyl-L-aspartate(89)-[ribosomal protein uS12]-hydrogen + (sulfur carrier)-H + 5'-deoxyadenosine + L-methionine + A + S-adenosyl-L-homocysteine + 2 H(+). Functionally, catalyzes the methylthiolation of an aspartic acid residue of ribosomal protein uS12. The chain is Ribosomal protein uS12 methylthiotransferase RimO from Leptospira borgpetersenii serovar Hardjo-bovis (strain JB197).